Reading from the N-terminus, the 776-residue chain is MADRSAIQLIDEEKEFHQSALQYFQQCIGNRDVGLDYHVISVFGSQSSGKSTLLNVLFNTNFDTMDAQVKRQQTTKGIWLAHTKQVNTTIEIDNDRPDIFVLDVEGSDGSERGEDQDFERKAALFAIAVSEVLIVNMWEQQIGLYQGNNMALLKTVFEVNLSLFGKNDNDHKVLLLFVIRDHVGVTPLSSLSDSVTRELEKIWTELSKPAGCEGSSLYDYFDLKFVGLAHKLLQEDKFTQDVKKLGDSFVMKGTENYYFKPQYHHRLPLDGWTMYAENCWDQIERNKDLDLPTQQILVARFKTEEISNEALEEFISKYDESIAPLKGNLGSLTSQLVKLKEECLTKYDEQASRYARNVYMEKREALNTKLNSHISGTINEFLESLMEKLWDDLKLEVSSRDKATTSFVESVAAGKSKIEKEFNESMETFKKLGLLISNEEITCKFSDDIEERIKQLRDAELKAKIGRIKKNLVPELKDHVIHLLSHPSKKVWDDIMNDFESTIKDNISAYQVEKDKYDFKIGLSESENAKIYKNIRILAWRTLDTTVHDYLKIDTIVSILRDRFEDVFRYDAEGSPRLWKTEEEIDGAFRVAKEHALEVFEVLSLAVTSDNVEIIPDVPMAEEESGEDNEIYRDNEGVFHSRRFAHILTELQKENVLDQFRRQINITVLDSKRSIITTRTHIPPWIYVLLAVLGWNEFVAVIRNPLFVTLTLILGATFFVIHKFGLWGPVVNVVQSAVGETRTAIKDKLRQFVVEDHEVKESFEMKDFSKNEQKEK.

Topologically, residues 1 to 681 (MADRSAIQLI…KRSIITTRTH (681 aa)) are cytoplasmic. The 230-residue stretch at 34 to 263 (GLDYHVISVF…TENYYFKPQY (230 aa)) folds into the GB1/RHD3-type G domain. 44 to 51 (GSQSSGKS) is a binding site for GTP. The chain crosses the membrane as a helical span at residues 682–702 (IPPWIYVLLAVLGWNEFVAVI). Residues 703–705 (RNP) are Lumenal-facing. A helical membrane pass occupies residues 706–726 (LFVTLTLILGATFFVIHKFGL). Topologically, residues 727-776 (WGPVVNVVQSAVGETRTAIKDKLRQFVVEDHEVKESFEMKDFSKNEQKEK) are cytoplasmic.

It belongs to the TRAFAC class dynamin-like GTPase superfamily. GB1/RHD3 GTPase family. RHD3 subfamily. In terms of assembly, interacts with RTN1 and YOP1; GTP binding is not required for these interactions.

Its subcellular location is the endoplasmic reticulum membrane. Functionally, cooperates with the reticulon proteins RTN1 and RTN2 and the tubule-shaping DP1 family protein YOP1 to generate and maintain the structure of the tubular endoplasmic reticulum network. Has GTPase activity, which is required for its function in ER organization. The chain is Protein SEY1 from Saccharomyces cerevisiae (strain AWRI1631) (Baker's yeast).